The sequence spans 390 residues: 8-amino-7-oxononanoate synthase (390 aa).

Arg19 provides a ligand contact to substrate. 106–107 (GY) lines the pyridoxal 5'-phosphate pocket. His131 is a substrate binding site. Ser176, His204, and Thr233 together coordinate pyridoxal 5'-phosphate. Lys236 is modified (N6-(pyridoxal phosphate)lysine). Thr350 serves as a coordination point for substrate.

This sequence belongs to the class-II pyridoxal-phosphate-dependent aminotransferase family. BioF subfamily. As to quaternary structure, homodimer. Requires pyridoxal 5'-phosphate as cofactor.

It catalyses the reaction 6-carboxyhexanoyl-[ACP] + L-alanine + H(+) = (8S)-8-amino-7-oxononanoate + holo-[ACP] + CO2. It participates in cofactor biosynthesis; biotin biosynthesis. Its function is as follows. Catalyzes the decarboxylative condensation of pimeloyl-[acyl-carrier protein] and L-alanine to produce 8-amino-7-oxononanoate (AON), [acyl-carrier protein], and carbon dioxide. The chain is 8-amino-7-oxononanoate synthase from Pseudomonas entomophila (strain L48).